A 1289-amino-acid polypeptide reads, in one-letter code: MNRTVSTLSSTVSDVSVEIPSICNVINTELPTSDVYLYTLKLILLDYINEPRFKEAALLSNRTGTSRVLSDKTNHQQTQHGKKLVVDKQDDMSERDIVQATLRILKGKLAQISGNKNLAPNEMHWKSIVKMYYSMLDSSSADTFSKMGQMEEVVGYFTNIASNELKKMTIKNSRDELFSEVAYFIDLVIDVLPDSCANIIKRLLDYKINLKKGETTVKKKRAASPATVPQYRSISGSTISNKQPSFKVQDISHMKYFMQLFETDETKLHQDVMAVKDDCTNPIFCGELRYLRKKIKKDNGTLTASDFSSDREYNLWKNYELLEIANLMDRFEIGEKVTSHGNRLIPKDAKSVFVRLIGLVLKKECSNAVNAINLSQEALFFFHKSARYWRIEYPSTISSLVYSAANLSVLGDEELNIPITENLFSVIRNKYLCSEDNLDPSAWNAQDRYLWAANLFHTTDQSMRTINNLLTAIFSGTKPKFSPVLSFYYSNIVGDPVMEFYETQSVAVKKYWIKLFKKTLFKASEDYFVSLLQDMLKANAIEIQNVQNLVETIIEAIKAIQKRYNKPLLDEISLPRQCAVFLCEVYGSDSLNLIKTAEKSTMKMTGQKLGPIDALDMYDVLKELRQIYLQVKPKGKFFFNLENYFIKYLTRLCDDVSRNVQKVIKSSLESENWQPVNDQDHFSRSVLDIFKMINESTSMLEKFGWQNEFQLAQMITVILKAFSDGMLSYSAQLMELIQRDLQEGDEPSYSLESSDTRSSLSLNNANVNHEKSRSSRLFEDLKNVVKSTPKMVAPAPYQFKKRTCVLLNDLDKTLFLLESFEEKADPSKISSVIAQYHSSHNLEDNGKSFDDQNMKQVYTLRIIGAENIKGFSKTGLSNTYVSMRNITLQREIGTTKIVARSITPKWDEEFVFESPFGKSNDIMFTIWHHPHSRLKNLAEDDLCGKANMKFTPRKLKDDGFPIDFSLTLNPQGTLYCQISLESEKIDAVSSMGRIYRSFSRSRDRAINLIVNKFSDFIAFAFSRTTLKTVCGHHGSALASDEAVYDAILPLFDYLNANLNILASELSQRLLFMVMLRAWNLVLENADLLLLPALNSAKVNILRSAKKSLWENTLSTTKTVSGYGRPLTQAEIEAVFKWLDALCVDFFHNKGEGPPLAELKNEYYQNILLIPAFYDKSVSELKDEVQRLIPLYEEYLRWFYLKKTPITFTNKSAGTISRKKSLVANIVKEPKEQLERDAEVMNIILRILIAKGQHDYVHRILHDRKELVNTMKNRRAVSRAVTPTGKKGRN.

Positions 615–733 (LDMYDVLKEL…DGMLSYSAQL (119 aa)) constitute an MHD1 domain. The interval 745–774 (DEPSYSLESSDTRSSLSLNNANVNHEKSRS) is disordered. A compositionally biased stretch (low complexity) spans 748–762 (SYSLESSDTRSSLSL). One can recognise a C2 domain in the interval 834 to 966 (AQYHSSHNLE…DDGFPIDFSL (133 aa)). The 141-residue stretch at 1044-1184 (YDAILPLFDY…KSVSELKDEV (141 aa)) folds into the MHD2 domain.

It is found in the cytoplasm. This is an uncharacterized protein from Saccharomyces cerevisiae (strain ATCC 204508 / S288c) (Baker's yeast).